The sequence spans 179 residues: uncharacterized protein (179 aa).

A signal peptide spans 1-27; sequence MNKSMIQSGGYVLLAGLILAMSSTLFA. A disulfide bond links Cys-43 and Cys-83.

This sequence belongs to the fimbrial protein family.

It localises to the fimbrium. In terms of biological role, part of the yfcOPQRSUV fimbrial operon. Could contribute to adhesion to various surfaces in specific environmental niches. Increases adhesion to eukaryotic T24 bladder epithelial cells in the absence of fim genes. This is an uncharacterized protein from Escherichia coli (strain K12).